A 385-amino-acid chain; its full sequence is Non-structural maintenance of chromosomes element 4 homolog A (385 aa).

A disordered region spans residues 1-69 (MSGDSSGRGP…PSDSGDEMMD (69 aa)). Basic and acidic residues-rich tracts occupy residues 10-21 (PEGRGRGRDPHR) and 42-55 (SARERREAPERPSL). A compositionally biased stretch (acidic residues) spans 56–68 (EDTEPSDSGDEMM). Phosphothreonine is present on T345. At S377 the chain carries Phosphoserine.

This sequence belongs to the NSE4 family. As to quaternary structure, component of the SMC5-SMC6 complex which consists at least of SMC5, SMC6, NSMCE2, NSMCE1, NSMCE4A or EID3 and NSMCE3. NSMCE1, NSMCE4A or EID3 and NSMCE3 probably form a subcomplex that bridges the head domains of the SMC5:SMC6 heterodimer. Interacts with NSMCE3.

The protein localises to the nucleus. Its subcellular location is the chromosome. It localises to the telomere. Its function is as follows. Component of the SMC5-SMC6 complex, a complex involved in DNA double-strand breaks by homologous recombination. The complex may promote sister chromatid homologous recombination by recruiting the SMC1-SMC3 cohesin complex to double-strand breaks. The complex is required for telomere maintenance via recombination in ALT (alternative lengthening of telomeres) cell lines and mediates sumoylation of shelterin complex (telosome) components which is proposed to lead to shelterin complex disassembly in ALT-associated PML bodies (APBs). Is involved in positive regulation of response to DNA damage stimulus. The protein is Non-structural maintenance of chromosomes element 4 homolog A (NSMCE4A) of Homo sapiens (Human).